A 139-amino-acid chain; its full sequence is Histone H2B (139 aa).

A compositionally biased stretch (low complexity) spans 1–37 (MAPKSVASKAPASQASKAPAAASKAPAKAAKTSAAPK). The segment at 1–48 (MAPKSVASKAPASQASKAPAAASKAPAKAAKTSAAPKDGAKKRSKKRV) is disordered. N6-acetyllysine; alternate is present on lysine 9. A Glycyl lysine isopeptide (Lys-Gly) (interchain with G-Cter in SUMO); alternate cross-link involves residue lysine 9. Serine 13 is modified (phosphoserine). The residue at position 17 (lysine 17) is an N6-acetyllysine. Lysine 134 participates in a covalent cross-link: Glycyl lysine isopeptide (Lys-Gly) (interchain with G-Cter in ubiquitin).

It belongs to the histone H2B family. The nucleosome is a histone octamer containing two molecules each of H2A, H2B, H3 and H4 assembled in one H3-H4 heterotetramer and two H2A-H2B heterodimers. The octamer wraps approximately 147 bp of DNA. In terms of processing, monoubiquitinated by the UBC2-BRE1 complex to form H2BK123ub1. H2BK123ub1 gives a specific tag for epigenetic transcriptional activation and is also prerequisite for H3K4me and H3K79me formation. H2BK123ub1 also modulates the formation of double-strand breaks during meiosis and is a prerequisite for DNA-damage checkpoint activation. Post-translationally, phosphorylated to form H2BS10ph during progression through meiotic prophase. May be correlated with chromosome condensation. Acetylation of N-terminal lysines and particularly formation of H2BK11ac has a positive effect on transcription. In terms of processing, sumoylation to form H2BK6su occurs preferentially near the telomeres and represses gene transcription.

Its subcellular location is the nucleus. It localises to the chromosome. In terms of biological role, core component of nucleosome. Nucleosomes wrap and compact DNA into chromatin, limiting DNA accessibility to the cellular machineries which require DNA as a template. Histones thereby play a central role in transcription regulation, DNA repair, DNA replication and chromosomal stability. DNA accessibility is regulated via a complex set of post-translational modifications of histones, also called histone code, and nucleosome remodeling. This is Histone H2B (HTB1) from Cryptococcus neoformans var. neoformans serotype D (strain B-3501A) (Filobasidiella neoformans).